A 212-amino-acid chain; its full sequence is Small ribosomal subunit protein uS5 (212 aa).

The tract at residues 1 to 42 (MPGRERRDGGRSADKNDNNKGRNDRGRNDRNNRRGRGRDDDR) is disordered. One can recognise an S5 DRBM domain in the interval 45–108 (YIERVVTINR…EEARKNFFRV (64 aa)).

It belongs to the universal ribosomal protein uS5 family. In terms of assembly, part of the 30S ribosomal subunit. Contacts proteins S4 and S8.

Functionally, with S4 and S12 plays an important role in translational accuracy. Located at the back of the 30S subunit body where it stabilizes the conformation of the head with respect to the body. This is Small ribosomal subunit protein uS5 from Corynebacterium kroppenstedtii (strain DSM 44385 / JCM 11950 / CIP 105744 / CCUG 35717).